The chain runs to 255 residues: Acetyl-coenzyme A carboxylase carboxyl transferase subunit alpha (255 aa).

One can recognise a CoA carboxyltransferase C-terminal domain in the interval 1-235 (MNIAKIVREA…KKELQTELAR (235 aa)).

Belongs to the AccA family. Acetyl-CoA carboxylase is a heterohexamer composed of biotin carboxyl carrier protein (AccB), biotin carboxylase (AccC) and two subunits each of ACCase subunit alpha (AccA) and ACCase subunit beta (AccD).

The protein resides in the cytoplasm. The enzyme catalyses N(6)-carboxybiotinyl-L-lysyl-[protein] + acetyl-CoA = N(6)-biotinyl-L-lysyl-[protein] + malonyl-CoA. It functions in the pathway lipid metabolism; malonyl-CoA biosynthesis; malonyl-CoA from acetyl-CoA: step 1/1. In terms of biological role, component of the acetyl coenzyme A carboxylase (ACC) complex. First, biotin carboxylase catalyzes the carboxylation of biotin on its carrier protein (BCCP) and then the CO(2) group is transferred by the carboxyltransferase to acetyl-CoA to form malonyl-CoA. This chain is Acetyl-coenzyme A carboxylase carboxyl transferase subunit alpha, found in Streptococcus pneumoniae serotype 2 (strain D39 / NCTC 7466).